A 78-amino-acid chain; its full sequence is uncharacterized protein (78 aa).

Residues 1 to 78 (MSSNSNTDHS…VDLEGPKDEQ (78 aa)) form a disordered region. Basic and acidic residues-rich tracts occupy residues 10–33 (STGD…ETES) and 63–78 (LNLK…KDEQ).

This is an uncharacterized protein from Schizosaccharomyces pombe (strain 972 / ATCC 24843) (Fission yeast).